Reading from the N-terminus, the 115-residue chain is Large ribosomal subunit protein bL19 (115 aa).

It belongs to the bacterial ribosomal protein bL19 family.

In terms of biological role, this protein is located at the 30S-50S ribosomal subunit interface and may play a role in the structure and function of the aminoacyl-tRNA binding site. The chain is Large ribosomal subunit protein bL19 from Streptococcus sanguinis (strain SK36).